Reading from the N-terminus, the 194-residue chain is Peptidyl-tRNA hydrolase (194 aa).

Y17 lines the tRNA pocket. H22 acts as the Proton acceptor in catalysis. Residues Y68, N70, and N115 each contribute to the tRNA site.

The protein belongs to the PTH family. As to quaternary structure, monomer.

The protein localises to the cytoplasm. The enzyme catalyses an N-acyl-L-alpha-aminoacyl-tRNA + H2O = an N-acyl-L-amino acid + a tRNA + H(+). Its function is as follows. Hydrolyzes ribosome-free peptidyl-tRNAs (with 1 or more amino acids incorporated), which drop off the ribosome during protein synthesis, or as a result of ribosome stalling. In terms of biological role, catalyzes the release of premature peptidyl moieties from peptidyl-tRNA molecules trapped in stalled 50S ribosomal subunits, and thus maintains levels of free tRNAs and 50S ribosomes. The polypeptide is Peptidyl-tRNA hydrolase (Pseudoalteromonas atlantica (strain T6c / ATCC BAA-1087)).